A 395-amino-acid polypeptide reads, in one-letter code: Guanine nucleotide-binding protein subunit beta-5 (395 aa).

WD repeat units follow at residues 103–142, 145–184, 193–234, 236–278, 279–318, 320–362, and 365–394; these read GHGN…KEHA, MPCT…NENM, MHTN…QSFH, HGAD…QAFE, THES…EVAI, SKES…RVSI, and GHEN…LRVW.

This sequence belongs to the WD repeat G protein beta family. In terms of assembly, component of a complex composed of RGS9 (isoform RGS9-1), GNB5 and RGS9BP; within this complex, the presence of GNB5 stabilizes both itself and RGS9 and increases RGS9 GTPase-activating protein (GAP) activity. Interacts with RGS7, forming the RGS7-GNB5 complex; within this complex, the presence of GNB5 increases RGS7 GTPase-activating protein (GAP) activity. Interacts with GPR158; promotes the GTPase activator activity of the RGS7-GNB5 complex in absence of glycine, in contrast GTPase activator activity of the RGS7-GNB5 complex is inhibited in presence of glycine. Interacts with RGS6. As to expression, widely expressed.

The protein localises to the membrane. Its function is as follows. Enhances GTPase-activating protein (GAP) activity of regulator of G protein signaling (RGS) proteins, such as RGS7 and RGS9, hence involved in the termination of the signaling initiated by the G protein coupled receptors (GPCRs) by accelerating the GTP hydrolysis on the G-alpha subunits, thereby promoting their inactivation. Increases RGS7 GTPase-activating protein (GAP) activity, thereby regulating mood and cognition. Increases RGS9 GTPase-activating protein (GAP) activity, hence contributes to the deactivation of G protein signaling initiated by D(2) dopamine receptors. May play an important role in neuronal signaling, including in the parasympathetic, but not sympathetic, control of heart rate. The protein is Guanine nucleotide-binding protein subunit beta-5 (GNB5) of Homo sapiens (Human).